Here is an 885-residue protein sequence, read N- to C-terminus: Aconitate hydratase A (885 aa).

Positions 425, 491, and 494 each coordinate [4Fe-4S] cluster.

It belongs to the aconitase/IPM isomerase family. As to quaternary structure, monomer. It depends on [4Fe-4S] cluster as a cofactor.

It catalyses the reaction citrate = D-threo-isocitrate. The catalysed reaction is (2S,3R)-3-hydroxybutane-1,2,3-tricarboxylate = 2-methyl-cis-aconitate + H2O. Its pathway is carbohydrate metabolism; tricarboxylic acid cycle; isocitrate from oxaloacetate: step 2/2. It participates in organic acid metabolism; propanoate degradation. In terms of biological role, involved in the catabolism of short chain fatty acids (SCFA) via the tricarboxylic acid (TCA)(acetyl degradation route) and probably the 2-methylcitrate cycle I (propionate degradation route). Catalyzes the reversible isomerization of citrate to isocitrate via cis-aconitate. Could catalyze the hydration of 2-methyl-cis-aconitate to yield (2R,3S)-2-methylisocitrate. The apo form of AcnA functions as a RNA-binding regulatory protein. The protein is Aconitate hydratase A (acnA) of Rickettsia bellii (strain RML369-C).